We begin with the raw amino-acid sequence, 389 residues long: Large envelope protein (389 aa).

M1 carries the N-acetylmethionine modification. A lipid anchor (N-myristoyl glycine; by host) is attached at G2. The pre-S1 stretch occupies residues 2 to 108 (GTNLSVPNPL…PPLRDTHPQA (107 aa)). Residues 2–163 (GTNLSVPNPL…LSKTGDPVPN (162 aa)) are pre-S. Over 2–170 (GTNLSVPNPL…VPNMENIASG (169 aa)) the chain is Virion surface; in external conformation. Over 2–242 (GTNLSVPNPL…PGYRWMCLRR (241 aa)) the chain is Intravirion; in internal conformation. The disordered stretch occupies residues 73–107 (ILTSVPAAPPPASTNRQSGRQPTPLSPPLRDTHPQ). The segment covering 85 to 95 (STNRQSGRQPT) has biased composition (polar residues). A pre-S2 region spans residues 109–163 (MQWNSTTFHQTLQDPRVRALYFPAGGSSSGTVSPAQNTVSAISSILSKTGDPVPN). Residues 171–191 (LLGPLLVLQAGFFLLTKILTI) traverse the membrane as a helical segment. At 192-242 (PQSLDSWWTSLNFLGGTPVCLGQNSQSQISSHSPTCCPPICPGYRWMCLRR) the chain is on the intravirion; in external conformation side. The chain crosses the membrane as a helical span at residues 243-263 (FIIFLCILLLCLIFLLVLLDY). Over 264 to 337 (QGMLPVCPLI…WASVRFSWLS (74 aa)) the chain is Virion surface. N-linked (GlcNAc...) asparagine; by host glycosylation occurs at N309. The chain crosses the membrane as a helical span at residues 338–358 (LLVPFVQWFVGLSPTVWLSVI). Topologically, residues 359–364 (WMMWYW) are intravirion. A helical transmembrane segment spans residues 365-387 (GPSLYNILSPFMPLLPIFFCLWV). At 388–389 (YI) the chain is on the virion surface side.

The protein belongs to the orthohepadnavirus major surface antigen family. As to quaternary structure, interacts (via its myristoylated pre-S1 region) with the host SLC10A1/NTCP; this interaction is essential for viral entry. In its internal form (Li-HBsAg), interacts with the capsid protein and with the isoform S. Interacts with host chaperone CANX. In terms of assembly, associates with host chaperone CANX through its pre-S2 N glycan; this association may be essential for isoform M proper secretion. As to quaternary structure, interacts with isoform L. Interacts with the antigens of satellite virus HDV (HDVAgs); this interaction is required for encapsidation of HDV genomic RNA. Isoform M is N-terminally acetylated by host at a ratio of 90%, and N-glycosylated by host at the pre-S2 region. Post-translationally, myristoylated; this modification is essential for its interaction with the host protein SLC10A1/NTCP.

It localises to the virion membrane. The large envelope protein exists in two topological conformations, one which is termed 'external' or Le-HBsAg and the other 'internal' or Li-HBsAg. In its external conformation the protein attaches the virus to cell receptors and thereby initiating infection. This interaction determines the species specificity and liver tropism. This attachment induces virion internalization predominantly through caveolin-mediated endocytosis. The large envelope protein also assures fusion between virion membrane and endosomal membrane. In its internal conformation the protein plays a role in virion morphogenesis and mediates the contact with the nucleocapsid like a matrix protein. Functionally, the middle envelope protein plays an important role in the budding of the virion. It is involved in the induction of budding in a nucleocapsid independent way. In this process the majority of envelope proteins bud to form subviral lipoprotein particles of 22 nm of diameter that do not contain a nucleocapsid. The chain is Large envelope protein from Hepatitis B virus genotype B1 subtype adw (isolate Japan/pJDW233/1988) (HBV-B).